The following is a 78-amino-acid chain: Large ribosomal subunit protein bL28 (78 aa).

A disordered region spans residues 1–26 (MARVCQVTGKRPMSGHNVSHANNKTK).

The protein belongs to the bacterial ribosomal protein bL28 family.

In Nitrosomonas europaea (strain ATCC 19718 / CIP 103999 / KCTC 2705 / NBRC 14298), this protein is Large ribosomal subunit protein bL28.